A 629-amino-acid polypeptide reads, in one-letter code: Hemocyanin G chain (629 aa).

Cu cation-binding residues include histidine 171, histidine 175, histidine 202, histidine 322, histidine 326, and histidine 362. Asparagine 447 and asparagine 506 each carry an N-linked (GlcNAc...) asparagine glycan. Cysteine 534 and cysteine 582 form a disulfide bridge. N-linked (GlcNAc...) asparagine glycosylation is present at asparagine 615.

This sequence belongs to the tyrosinase family. Hemocyanin subfamily. Tarantula hemocyanin is a 24-chain polymer with seven different chains identified. In terms of tissue distribution, hemolymph.

The protein resides in the secreted. Its subcellular location is the extracellular space. Hemocyanins are copper-containing oxygen carriers occurring freely dissolved in the hemolymph of many mollusks and arthropods. The polypeptide is Hemocyanin G chain (HCG) (Aphonopelma sp. (American tarantula)).